Reading from the N-terminus, the 241-residue chain is Probable septum site-determining protein MinC (241 aa).

Residues 109-135 (PSGARERKVDPSSKTPAKPAEPTYRPT) are disordered.

It belongs to the MinC family. Interacts with MinD and FtsZ.

In terms of biological role, cell division inhibitor that blocks the formation of polar Z ring septums. Rapidly oscillates between the poles of the cell to destabilize FtsZ filaments that have formed before they mature into polar Z rings. Prevents FtsZ polymerization. The polypeptide is Probable septum site-determining protein MinC (Stutzerimonas stutzeri (strain A1501) (Pseudomonas stutzeri)).